Consider the following 102-residue polypeptide: Ribosomal silencing factor RsfS (102 aa).

The protein belongs to the Iojap/RsfS family. Interacts with ribosomal protein uL14 (rplN).

Its subcellular location is the cytoplasm. Functionally, functions as a ribosomal silencing factor. Interacts with ribosomal protein uL14 (rplN), blocking formation of intersubunit bridge B8. Prevents association of the 30S and 50S ribosomal subunits and the formation of functional ribosomes, thus repressing translation. The chain is Ribosomal silencing factor RsfS from Haemophilus influenzae (strain ATCC 51907 / DSM 11121 / KW20 / Rd).